The chain runs to 424 residues: Serine--tRNA ligase (424 aa).

229 to 231 (TAE) contacts L-serine. Position 260–262 (260–262 (RRE)) interacts with ATP. An L-serine-binding site is contributed by Glu-283. 347–350 (EVSS) is a binding site for ATP. Residue Ser-383 participates in L-serine binding.

Belongs to the class-II aminoacyl-tRNA synthetase family. Type-1 seryl-tRNA synthetase subfamily. In terms of assembly, homodimer. The tRNA molecule binds across the dimer.

It is found in the cytoplasm. It catalyses the reaction tRNA(Ser) + L-serine + ATP = L-seryl-tRNA(Ser) + AMP + diphosphate + H(+). The catalysed reaction is tRNA(Sec) + L-serine + ATP = L-seryl-tRNA(Sec) + AMP + diphosphate + H(+). It participates in aminoacyl-tRNA biosynthesis; selenocysteinyl-tRNA(Sec) biosynthesis; L-seryl-tRNA(Sec) from L-serine and tRNA(Sec): step 1/1. Functionally, catalyzes the attachment of serine to tRNA(Ser). Is also able to aminoacylate tRNA(Sec) with serine, to form the misacylated tRNA L-seryl-tRNA(Sec), which will be further converted into selenocysteinyl-tRNA(Sec). The protein is Serine--tRNA ligase of Roseiflexus castenholzii (strain DSM 13941 / HLO8).